Reading from the N-terminus, the 170-residue chain is Myosin regulatory light chain 1 (170 aa).

The span at 1–13 shows a compositional bias: basic residues; it reads MSKAAKKKSSKKR. The segment at 1 to 22 is disordered; the sequence is MSKAAKKKSSKKRSGSEAAQFD. EF-hand domains follow at residues 24–59 and 93–128; these read KTIQEFKEAFGIMDQNKDGIIDKSDLKDLYASMGQI and DPEATIIGAFAMFDKKDCGKIKEDDLIKILQNKRGE. Ca(2+)-binding residues include Asp-37, Asn-39, Asp-41, and Asp-48.

As to quaternary structure, myosin is a hexamer of 2 heavy chains and 4 light chains (two regulatory light chains and two essential light chains).

This is Myosin regulatory light chain 1 (mlc-1) from Caenorhabditis elegans.